A 156-amino-acid polypeptide reads, in one-letter code: 6,7-dimethyl-8-ribityllumazine synthase (156 aa).

Residues Phe-22, 57-59, and 81-83 contribute to the 5-amino-6-(D-ribitylamino)uracil site; these read AYE and TVI. 86-87 lines the (2S)-2-hydroxy-3-oxobutyl phosphate pocket; the sequence is GT. The active-site Proton donor is the His-89. Residue Phe-114 participates in 5-amino-6-(D-ribitylamino)uracil binding. A (2S)-2-hydroxy-3-oxobutyl phosphate-binding site is contributed by Arg-128.

This sequence belongs to the DMRL synthase family. In terms of assembly, forms an icosahedral capsid composed of 60 subunits, arranged as a dodecamer of pentamers.

It carries out the reaction (2S)-2-hydroxy-3-oxobutyl phosphate + 5-amino-6-(D-ribitylamino)uracil = 6,7-dimethyl-8-(1-D-ribityl)lumazine + phosphate + 2 H2O + H(+). It functions in the pathway cofactor biosynthesis; riboflavin biosynthesis; riboflavin from 2-hydroxy-3-oxobutyl phosphate and 5-amino-6-(D-ribitylamino)uracil: step 1/2. In terms of biological role, catalyzes the formation of 6,7-dimethyl-8-ribityllumazine by condensation of 5-amino-6-(D-ribitylamino)uracil with 3,4-dihydroxy-2-butanone 4-phosphate. This is the penultimate step in the biosynthesis of riboflavin. This chain is 6,7-dimethyl-8-ribityllumazine synthase, found in Citrobacter koseri (strain ATCC BAA-895 / CDC 4225-83 / SGSC4696).